We begin with the raw amino-acid sequence, 942 residues long: Leucine--tRNA ligase 1 (942 aa).

Positions 39–49 (PYTNSPLHIGH) match the 'HIGH' region motif. The short motif at 624–628 (KMSKS) is the 'KMSKS' region element. Lysine 627 provides a ligand contact to ATP.

The protein belongs to the class-I aminoacyl-tRNA synthetase family.

It localises to the cytoplasm. It catalyses the reaction tRNA(Leu) + L-leucine + ATP = L-leucyl-tRNA(Leu) + AMP + diphosphate. The polypeptide is Leucine--tRNA ligase 1 (Sulfolobus acidocaldarius (strain ATCC 33909 / DSM 639 / JCM 8929 / NBRC 15157 / NCIMB 11770)).